The following is a 174-amino-acid chain: Small ribosomal subunit protein uS7c (174 aa).

Belongs to the universal ribosomal protein uS7 family. In terms of assembly, part of the 30S ribosomal subunit.

It is found in the plastid. The protein resides in the chloroplast. One of the primary rRNA binding proteins, it binds directly to 16S rRNA where it nucleates assembly of the head domain of the 30S subunit. The polypeptide is Small ribosomal subunit protein uS7c (rps7) (Stigeoclonium helveticum (Green alga)).